Reading from the N-terminus, the 208-residue chain is MARLNVKPTRMELSNLKNRLKTATRGHKLLKDKRDELMRRFVDLIRENNELRQTLEKELAANMKEFVLAKASENSLMVEELFAVPVHEVTLWIDIENIMSVNVPKFHVQSNTAREQEQGEFAYSYLSSNSEMDNTIQKTKELLEKLLRLAEVEKTCQLMADDIEKTRRRVNGLEYSIIPQLEETIHYIELKLEEAERASLVRIMKITS.

The protein belongs to the V-ATPase D subunit family.

Its function is as follows. Produces ATP from ADP in the presence of a proton gradient across the membrane. The protein is V-type ATP synthase subunit D of Streptococcus pyogenes serotype M6 (strain ATCC BAA-946 / MGAS10394).